The primary structure comprises 714 residues: ATP-dependent zinc metalloprotease FtsH (714 aa).

Residues 1–75 (MEKPRRLRPR…KNPMEPRQQQ (75 aa)) are Cytoplasmic-facing. A helical transmembrane segment spans residues 76-96 (FSLWYVLVTILAMLAIQTLFV). Residues 97 to 188 (SGHVETIPYS…FVGQPDNKWL (92 aa)) lie on the Periplasmic side of the membrane. The chain crosses the membrane as a helical span at residues 189–209 (STILSWVVPAVIFFGIWSFLI). The Cytoplasmic portion of the chain corresponds to 210-714 (KRVGGAAGSM…GKPDQKTQGT (505 aa)). An ATP-binding site is contributed by 280-287 (GAPGTGKT). H502 contacts Zn(2+). E503 is a catalytic residue. Zn(2+) is bound by residues H506 and D579. Positions 688–714 (PMPPPKPVANIEESTATGKPDQKTQGT) are disordered. The span at 699–714 (EESTATGKPDQKTQGT) shows a compositional bias: polar residues.

The protein in the central section; belongs to the AAA ATPase family. It in the C-terminal section; belongs to the peptidase M41 family. As to quaternary structure, homohexamer. Zn(2+) is required as a cofactor.

It is found in the cell inner membrane. In terms of biological role, acts as a processive, ATP-dependent zinc metallopeptidase for both cytoplasmic and membrane proteins. Plays a role in the quality control of integral membrane proteins. In Ralstonia pickettii (strain 12J), this protein is ATP-dependent zinc metalloprotease FtsH.